The following is a 131-amino-acid chain: Small ribosomal subunit protein uS8 (131 aa).

It belongs to the universal ribosomal protein uS8 family. Part of the 30S ribosomal subunit. Contacts proteins S5 and S12.

Functionally, one of the primary rRNA binding proteins, it binds directly to 16S rRNA central domain where it helps coordinate assembly of the platform of the 30S subunit. This chain is Small ribosomal subunit protein uS8, found in Hydrogenovibrio crunogenus (strain DSM 25203 / XCL-2) (Thiomicrospira crunogena).